Reading from the N-terminus, the 551-residue chain is Hedycaryol synthase TPS20CT (551 aa).

(2E,6E)-farnesyl diphosphate is bound by residues Arg-266, Asp-303, Asp-307, Arg-444, and Asp-447. Positions 303 and 307 each coordinate Mg(2+). The short motif at 303–307 (DDIYD) is the DDXXD motif element. Mg(2+)-binding residues include Asp-447, Ser-451, and Glu-455.

This sequence belongs to the terpene synthase family. Tpsb subfamily. Mg(2+) serves as cofactor. Mn(2+) is required as a cofactor. In terms of tissue distribution, highly expressed in glandular trichomes.

It carries out the reaction (2E,6E)-farnesyl diphosphate + H2O = (2E,6E)-hedycaryol + diphosphate. Its pathway is secondary metabolite biosynthesis; terpenoid biosynthesis. Functionally, involved in sesquiterpene olefins biosynthesis, constituants of cannabinoids and terpenoids-rich resins. Catalyzes primarily the conversion of (2E)-farnesyl diphosphate to hedycaryol, which is spontaneously converted to elemol as a thermal degradation product. In Cannabis sativa (Hemp), this protein is Hedycaryol synthase TPS20CT.